Consider the following 121-residue polypeptide: MALNIENIIAEIKEATILELNDLVKAIEEEFGVTAAAPVAAAAAGGEAAAAKDSFDVELTAAGDKKVGVIKVVREITGEGLKEAKAIVDNAPSVIKEGASEAEANEIKEKLEAAGASVTLK.

Belongs to the bacterial ribosomal protein bL12 family. Homodimer. Part of the ribosomal stalk of the 50S ribosomal subunit. Forms a multimeric L10(L12)X complex, where L10 forms an elongated spine to which 2 to 4 L12 dimers bind in a sequential fashion. Binds GTP-bound translation factors.

Forms part of the ribosomal stalk which helps the ribosome interact with GTP-bound translation factors. Is thus essential for accurate translation. This Streptococcus agalactiae serotype V (strain ATCC BAA-611 / 2603 V/R) protein is Large ribosomal subunit protein bL12.